Reading from the N-terminus, the 319-residue chain is Pantothenate kinase (319 aa).

Gly97–Ser104 contacts ATP.

Belongs to the prokaryotic pantothenate kinase family.

The protein resides in the cytoplasm. The catalysed reaction is (R)-pantothenate + ATP = (R)-4'-phosphopantothenate + ADP + H(+). Its pathway is cofactor biosynthesis; coenzyme A biosynthesis; CoA from (R)-pantothenate: step 1/5. This Mesorhizobium japonicum (strain LMG 29417 / CECT 9101 / MAFF 303099) (Mesorhizobium loti (strain MAFF 303099)) protein is Pantothenate kinase.